A 394-amino-acid chain; its full sequence is NAD(P)H-quinone oxidoreductase subunit H (394 aa).

This sequence belongs to the complex I 49 kDa subunit family. In terms of assembly, NDH-1 can be composed of about 15 different subunits; different subcomplexes with different compositions have been identified which probably have different functions.

It localises to the cellular thylakoid membrane. The catalysed reaction is a plastoquinone + NADH + (n+1) H(+)(in) = a plastoquinol + NAD(+) + n H(+)(out). It catalyses the reaction a plastoquinone + NADPH + (n+1) H(+)(in) = a plastoquinol + NADP(+) + n H(+)(out). NDH-1 shuttles electrons from an unknown electron donor, via FMN and iron-sulfur (Fe-S) centers, to quinones in the respiratory and/or the photosynthetic chain. The immediate electron acceptor for the enzyme in this species is believed to be plastoquinone. Couples the redox reaction to proton translocation, and thus conserves the redox energy in a proton gradient. Cyanobacterial NDH-1 also plays a role in inorganic carbon-concentration. The polypeptide is NAD(P)H-quinone oxidoreductase subunit H (Synechococcus sp. (strain CC9902)).